Here is a 206-residue protein sequence, read N- to C-terminus: Small ribosomal subunit protein uS4 (206 aa).

The S4 RNA-binding domain maps to 96–158; sequence SRLDNVVYRM…AKKQLRIQNA (63 aa).

It belongs to the universal ribosomal protein uS4 family. As to quaternary structure, part of the 30S ribosomal subunit. Contacts protein S5. The interaction surface between S4 and S5 is involved in control of translational fidelity.

In terms of biological role, one of the primary rRNA binding proteins, it binds directly to 16S rRNA where it nucleates assembly of the body of the 30S subunit. Its function is as follows. With S5 and S12 plays an important role in translational accuracy. The sequence is that of Small ribosomal subunit protein uS4 from Francisella tularensis subsp. tularensis (strain FSC 198).